The following is a 196-amino-acid chain: Molybdenum cofactor guanylyltransferase (196 aa).

GTP contacts are provided by residues 10–12, Lys23, Asn51, Asp69, and Asp99; that span reads LAG. Residue Asp99 coordinates Mg(2+).

It belongs to the MobA family. Monomer. Mg(2+) serves as cofactor.

It localises to the cytoplasm. It catalyses the reaction Mo-molybdopterin + GTP + H(+) = Mo-molybdopterin guanine dinucleotide + diphosphate. Its function is as follows. Transfers a GMP moiety from GTP to Mo-molybdopterin (Mo-MPT) cofactor (Moco or molybdenum cofactor) to form Mo-molybdopterin guanine dinucleotide (Mo-MGD) cofactor. This chain is Molybdenum cofactor guanylyltransferase, found in Shewanella frigidimarina (strain NCIMB 400).